Here is a 273-residue protein sequence, read N- to C-terminus: Putative phosphoenolpyruvate synthase regulatory protein (273 aa).

Residue 153 to 160 (GVSRSGKT) coordinates ADP.

The protein belongs to the pyruvate, phosphate/water dikinase regulatory protein family. PSRP subfamily.

The enzyme catalyses [pyruvate, water dikinase] + ADP = [pyruvate, water dikinase]-phosphate + AMP + H(+). The catalysed reaction is [pyruvate, water dikinase]-phosphate + phosphate + H(+) = [pyruvate, water dikinase] + diphosphate. Bifunctional serine/threonine kinase and phosphorylase involved in the regulation of the phosphoenolpyruvate synthase (PEPS) by catalyzing its phosphorylation/dephosphorylation. The polypeptide is Putative phosphoenolpyruvate synthase regulatory protein (Variovorax paradoxus (strain S110)).